Reading from the N-terminus, the 451-residue chain is BAHD acyltransferase At3g29680 (451 aa).

Active-site proton acceptor residues include histidine 161 and aspartate 393.

It belongs to the plant acyltransferase family.

The sequence is that of BAHD acyltransferase At3g29680 from Arabidopsis thaliana (Mouse-ear cress).